Reading from the N-terminus, the 480-residue chain is Protein nucleotidyltransferase YdiU (480 aa).

ATP-binding residues include glycine 86, glycine 88, arginine 89, lysine 109, aspartate 121, glycine 122, arginine 172, and arginine 179. Residue aspartate 248 is the Proton acceptor of the active site. Mg(2+)-binding residues include asparagine 249 and aspartate 258. Aspartate 258 is a binding site for ATP.

The protein belongs to the SELO family. Requires Mg(2+) as cofactor. Mn(2+) is required as a cofactor.

The catalysed reaction is L-seryl-[protein] + ATP = 3-O-(5'-adenylyl)-L-seryl-[protein] + diphosphate. It catalyses the reaction L-threonyl-[protein] + ATP = 3-O-(5'-adenylyl)-L-threonyl-[protein] + diphosphate. It carries out the reaction L-tyrosyl-[protein] + ATP = O-(5'-adenylyl)-L-tyrosyl-[protein] + diphosphate. The enzyme catalyses L-histidyl-[protein] + UTP = N(tele)-(5'-uridylyl)-L-histidyl-[protein] + diphosphate. The catalysed reaction is L-seryl-[protein] + UTP = O-(5'-uridylyl)-L-seryl-[protein] + diphosphate. It catalyses the reaction L-tyrosyl-[protein] + UTP = O-(5'-uridylyl)-L-tyrosyl-[protein] + diphosphate. Functionally, nucleotidyltransferase involved in the post-translational modification of proteins. It can catalyze the addition of adenosine monophosphate (AMP) or uridine monophosphate (UMP) to a protein, resulting in modifications known as AMPylation and UMPylation. In Salmonella heidelberg (strain SL476), this protein is Protein nucleotidyltransferase YdiU.